The sequence spans 158 residues: Large ribosomal subunit protein uL30 (158 aa).

It belongs to the universal ribosomal protein uL30 family. As to quaternary structure, part of the 50S ribosomal subunit.

In Saccharolobus islandicus (strain Y.N.15.51 / Yellowstone #2) (Sulfolobus islandicus), this protein is Large ribosomal subunit protein uL30.